A 129-amino-acid polypeptide reads, in one-letter code: CD59B glycoprotein (129 aa).

The first 23 residues, 1 to 23, serve as a signal peptide directing secretion; sequence MRAQRGLILLLLLLAVFCSTAVS. Residues 24 to 107 enclose the UPAR/Ly6 domain; the sequence is LKCYNCLDPV…GLEEPNNAET (84 aa). Cystine bridges form between Cys26/Cys49, Cys29/Cys36, Cys42/Cys62, Cys68/Cys86, and Cys87/Cys92. Asn39 is a glycosylation site (N-linked (GlcNAc...) asparagine). The GPI-anchor amidated asparagine moiety is linked to residue Asn104. The propeptide at 105-129 is removed in mature form; the sequence is AETSSLRKTALLGTSVLVAILKFCF.

Interacts with T-cell surface antigen CD2. In terms of processing, N- and O-glycosylated. Widely expressed in the kidneys, brain, lungs, spleen and testis Testis-specific.

The protein localises to the cell membrane. Its subcellular location is the secreted. Potent inhibitor of the complement membrane attack complex (MAC) action, which protects self-cells from damage during complement activation. Acts by binding to the beta-haipins of C8 (C8A and C8B) components of the assembling MAC, forming an intermolecular beta-sheet that prevents incorporation of the multiple copies of C9 required for complete formation of the osmolytic pore. The sequence is that of CD59B glycoprotein from Mus musculus (Mouse).